We begin with the raw amino-acid sequence, 377 residues long: Succinyl-diaminopimelate desuccinylase (377 aa).

Residue histidine 66 coordinates Zn(2+). Residue aspartate 68 is part of the active site. Aspartate 99 lines the Zn(2+) pocket. The active-site Proton acceptor is glutamate 133. Zn(2+)-binding residues include glutamate 134, glutamate 163, and histidine 349.

The protein belongs to the peptidase M20A family. DapE subfamily. In terms of assembly, homodimer. Requires Zn(2+) as cofactor. Co(2+) is required as a cofactor.

It carries out the reaction N-succinyl-(2S,6S)-2,6-diaminopimelate + H2O = (2S,6S)-2,6-diaminopimelate + succinate. Its pathway is amino-acid biosynthesis; L-lysine biosynthesis via DAP pathway; LL-2,6-diaminopimelate from (S)-tetrahydrodipicolinate (succinylase route): step 3/3. Catalyzes the hydrolysis of N-succinyl-L,L-diaminopimelic acid (SDAP), forming succinate and LL-2,6-diaminopimelate (DAP), an intermediate involved in the bacterial biosynthesis of lysine and meso-diaminopimelic acid, an essential component of bacterial cell walls. The chain is Succinyl-diaminopimelate desuccinylase from Legionella pneumophila (strain Paris).